A 388-amino-acid polypeptide reads, in one-letter code: Integrase (388 aa).

The region spanning 70-151 (YTVADAVNDW…CLNRAVKRAM (82 aa)) is the Core-binding (CB) domain. The region spanning 173 to 379 (RPSKALTFAQ…VIQTGAVVMD (207 aa)) is the Tyr recombinase domain. Residues Arg-208, Lys-249, Arg-330, and His-353 contribute to the active site. Residue Tyr-363 is the O-(3'-phospho-DNA)-tyrosine intermediate of the active site.

It belongs to the 'phage' integrase family.

In terms of biological role, required for integration of pSAM2. This is Integrase (int) from Streptomyces ambofaciens.